The primary structure comprises 184 residues: Large ribosomal subunit protein uL5 (184 aa).

This sequence belongs to the universal ribosomal protein uL5 family. As to quaternary structure, part of the 50S ribosomal subunit; part of the 5S rRNA/L5/L18/L25 subcomplex. Contacts the 5S rRNA and the P site tRNA. Forms a bridge to the 30S subunit in the 70S ribosome.

In terms of biological role, this is one of the proteins that bind and probably mediate the attachment of the 5S RNA into the large ribosomal subunit, where it forms part of the central protuberance. In the 70S ribosome it contacts protein S13 of the 30S subunit (bridge B1b), connecting the 2 subunits; this bridge is implicated in subunit movement. Contacts the P site tRNA; the 5S rRNA and some of its associated proteins might help stabilize positioning of ribosome-bound tRNAs. This Thermotoga sp. (strain RQ2) protein is Large ribosomal subunit protein uL5.